A 509-amino-acid polypeptide reads, in one-letter code: Maturase K (509 aa).

Belongs to the intron maturase 2 family. MatK subfamily.

The protein resides in the plastid. It is found in the chloroplast. Functionally, usually encoded in the trnK tRNA gene intron. Probably assists in splicing its own and other chloroplast group II introns. This Opuntia quimilo (Cactus) protein is Maturase K.